A 311-amino-acid chain; its full sequence is Tryptophan 2,3-dioxygenase (311 aa).

Positions 1 to 37 (MQPPGGDAPAGCPFSGARAAQPAQAAHEAPHVPGEAD) are disordered. Over residues 17-27 (ARAAQPAQAAH) the composition is skewed to low complexity. Residues 80 to 84 (FIIQH), Tyr-142, and Arg-146 each bind substrate. His-269 serves as a coordination point for heme. Thr-283 serves as a coordination point for substrate.

The protein belongs to the tryptophan 2,3-dioxygenase family. As to quaternary structure, homotetramer. Requires heme as cofactor.

It catalyses the reaction L-tryptophan + O2 = N-formyl-L-kynurenine. It functions in the pathway amino-acid degradation; L-tryptophan degradation via kynurenine pathway; L-kynurenine from L-tryptophan: step 1/2. In terms of biological role, heme-dependent dioxygenase that catalyzes the oxidative cleavage of the L-tryptophan (L-Trp) pyrrole ring and converts L-tryptophan to N-formyl-L-kynurenine. Catalyzes the oxidative cleavage of the indole moiety. This is Tryptophan 2,3-dioxygenase from Burkholderia orbicola (strain MC0-3).